Reading from the N-terminus, the 519-residue chain is Cytochrome P450 52A10 (519 aa).

Cys466 provides a ligand contact to heme.

The protein belongs to the cytochrome P450 family. It depends on heme as a cofactor.

Its subcellular location is the membrane. Together with an NADPH cytochrome P450 the enzyme system catalyzes the terminal hydroxylation as the first step in the assimilation of alkanes and fatty acids. The polypeptide is Cytochrome P450 52A10 (CYP52A10) (Candida maltosa (Yeast)).